The sequence spans 174 residues: Nucleoside-triphosphatase THEP1 (174 aa).

ATP-binding positions include 8-15 and 99-106; these read GIPGIGKS and LIVIDEVG.

It belongs to the THEP1 NTPase family.

The enzyme catalyses a ribonucleoside 5'-triphosphate + H2O = a ribonucleoside 5'-diphosphate + phosphate + H(+). Its function is as follows. Has nucleotide phosphatase activity towards ATP, GTP, CTP, TTP and UTP. May hydrolyze nucleoside diphosphates with lower efficiency. This Methanosarcina barkeri (strain Fusaro / DSM 804) protein is Nucleoside-triphosphatase THEP1.